The sequence spans 274 residues: Ribose-5-phosphate isomerase (274 aa).

Belongs to the ribose 5-phosphate isomerase family.

It is found in the cytoplasm. It carries out the reaction aldehydo-D-ribose 5-phosphate = D-ribulose 5-phosphate. It participates in carbohydrate degradation; pentose phosphate pathway; D-ribose 5-phosphate from D-ribulose 5-phosphate (non-oxidative stage): step 1/1. This chain is Ribose-5-phosphate isomerase (rki1), found in Schizosaccharomyces pombe (strain 972 / ATCC 24843) (Fission yeast).